The primary structure comprises 627 residues: DNA topoisomerase 4 subunit B (627 aa).

ATP contacts are provided by residues tyrosine 4, asparagine 41, aspartate 68, 109 to 115 (GLHGVGV), and lysine 333. Positions 412–525 (TELFIVEGDS…NGHIYIAQPP (114 aa)) constitute a Toprim domain. Mg(2+)-binding residues include glutamate 418, aspartate 490, and aspartate 492.

This sequence belongs to the type II topoisomerase family. ParE type 1 subfamily. In terms of assembly, heterotetramer composed of ParC and ParE. Mg(2+) serves as cofactor. Mn(2+) is required as a cofactor. Requires Ca(2+) as cofactor.

It carries out the reaction ATP-dependent breakage, passage and rejoining of double-stranded DNA.. With respect to regulation, pyrrolopyrimidines inhibit both GyrB and its paralog in topoisomerase IV (parE). Functionally, topoisomerase IV is essential for chromosome segregation. It relaxes supercoiled DNA. Performs the decatenation events required during the replication of a circular DNA molecule. This Francisella tularensis subsp. holarctica (strain LVS) protein is DNA topoisomerase 4 subunit B.